The primary structure comprises 364 residues: Beta-parvin (364 aa).

Positions methionine 1 to leucine 57 are disordered. Phosphoserine is present on serine 7. Basic and acidic residues predominate over residues arginine 36–lysine 46. Serine 54 carries the phosphoserine modification. 2 consecutive Calponin-homology (CH) domains span residues lysine 87 to arginine 194 and serine 254 to lysine 361.

It belongs to the parvin family. In terms of assembly, interacts with DYSF. Interacts with ILK, ARHGEF6, PXN (via LD motifs), ACTN2 and actin. As to expression, expressed predominantly in heart and skeletal muscle.

It localises to the cell junction. Its subcellular location is the focal adhesion. The protein resides in the cell membrane. It is found in the cytoplasm. The protein localises to the cytoskeleton. It localises to the cell projection. Its subcellular location is the lamellipodium. The protein resides in the myofibril. It is found in the sarcomere. The protein localises to the z line. Its function is as follows. Adapter protein that plays a role in integrin signaling via ILK and in activation of the GTPases CDC42 and RAC1 by guanine exchange factors, such as ARHGEF6. Is involved in the reorganization of the actin cytoskeleton and formation of lamellipodia. Plays a role in cell adhesion, cell spreading, establishment or maintenance of cell polarity, and cell migration. The protein is Beta-parvin (PARVB) of Homo sapiens (Human).